Here is a 239-residue protein sequence, read N- to C-terminus: Calcium-activated potassium channel subunit beta-3 (239 aa).

At 1 to 51 (MQPFSIPVQITLQGGRRRQGRTALPASGISNGDPLKVHPKLPSSAGEDRAT) the chain is on the cytoplasmic side. Positions 15-38 (GRRRQGRTALPASGISNGDPLKVH) are disordered. A helical transmembrane segment spans residues 52–72 (LLGIAMMASSVLMFFLLGTTV). Topologically, residues 73 to 197 (LKPFMLSSPR…GVVLRKSGHK (125 aa)) are extracellular. Residues N86, N123, and N174 are each glycosylated (N-linked (GlcNAc...) asparagine). Residues 198–218 (VVFHCLFWPLLTLLGGALIVG) traverse the membrane as a helical segment. The Cytoplasmic portion of the chain corresponds to 219–239 (LVRLTQHLSFQCEKYRAVVRA).

Belongs to the KCNMB (TC 8.A.14.1) family. KCNMB3 subfamily. As to quaternary structure, interacts with KCNMA1 tetramer. There are probably 4 molecules of KCMNB3 per KCNMA1 tetramer. N-glycosylated. In terms of processing, the extracellular domain contains disulfide bond essential for the gating mechanism.

The protein localises to the membrane. In terms of biological role, regulatory subunit of the calcium activated potassium KCNMA1 (maxiK) channel. Modulates the calcium sensitivity and gating kinetics of KCNMA1, thereby contributing to KCNMA1 channel diversity. Alters the functional properties of the current expressed by the KCNMA1 channel. May partially inactivate the current of KCNBMA. Two or more subunits of KCNMB3 are required to block the KCNMA1 tetramer. The polypeptide is Calcium-activated potassium channel subunit beta-3 (Rattus norvegicus (Rat)).